We begin with the raw amino-acid sequence, 127 residues long: Glycine cleavage system H protein (127 aa).

The Lipoyl-binding domain maps to 22–104; that stretch reads EVVIGITHFA…YEGAWMVKVE (83 aa). The residue at position 63 (Lys-63) is an N6-lipoyllysine.

The protein belongs to the GcvH family. The glycine cleavage system is composed of four proteins: P, T, L and H. (R)-lipoate serves as cofactor.

In terms of biological role, the glycine cleavage system catalyzes the degradation of glycine. The H protein shuttles the methylamine group of glycine from the P protein to the T protein. Its function is as follows. Is also involved in protein lipoylation via its role as an octanoyl/lipoyl carrier protein intermediate. This is Glycine cleavage system H protein from Bacillus cereus (strain ATCC 10987 / NRS 248).